We begin with the raw amino-acid sequence, 217 residues long: Uridylate kinase (217 aa).

K6–R10 is a binding site for ATP. Residue G38 participates in UMP binding. ATP is bound by residues G39 and R43. UMP-binding positions include D60 and F107 to T113. ATP contacts are provided by N134, Y139, and D142.

The protein belongs to the UMP kinase family. In terms of assembly, homohexamer.

The protein localises to the cytoplasm. It carries out the reaction UMP + ATP = UDP + ADP. It functions in the pathway pyrimidine metabolism; CTP biosynthesis via de novo pathway; UDP from UMP (UMPK route): step 1/1. Inhibited by UTP. In terms of biological role, catalyzes the reversible phosphorylation of UMP to UDP. The protein is Uridylate kinase of Pyrobaculum aerophilum (strain ATCC 51768 / DSM 7523 / JCM 9630 / CIP 104966 / NBRC 100827 / IM2).